We begin with the raw amino-acid sequence, 483 residues long: Chromosomal replication initiator protein DnaA (483 aa).

A domain I, interacts with DnaA modulators region spans residues 1 to 71; sequence MKEFWQTCVS…EALAAEWYQR (71 aa). Residues 71 to 145 are domain II; it reads RPVQVQFELP…DAANIVYERS (75 aa). The interval 146–362 is domain III, AAA+ region; that stretch reads RLNTDLTFEN…GALRKVLAYA (217 aa). G190, G192, K193, and T194 together coordinate ATP. Positions 363–483 are domain IV, binds dsDNA; that stretch reads RFHGREALNV…LHVLEQTLKG (121 aa).

Belongs to the DnaA family. Oligomerizes as a right-handed, spiral filament on DNA at oriC.

It localises to the cytoplasm. Plays an essential role in the initiation and regulation of chromosomal replication. ATP-DnaA binds to the origin of replication (oriC) to initiate formation of the DNA replication initiation complex once per cell cycle. Binds the DnaA box (a 9 base pair repeat at the origin) and separates the double-stranded (ds)DNA. Forms a right-handed helical filament on oriC DNA; dsDNA binds to the exterior of the filament while single-stranded (ss)DNA is stabiized in the filament's interior. The ATP-DnaA-oriC complex binds and stabilizes one strand of the AT-rich DNA unwinding element (DUE), permitting loading of DNA polymerase. After initiation quickly degrades to an ADP-DnaA complex that is not apt for DNA replication. Binds acidic phospholipids. The chain is Chromosomal replication initiator protein DnaA from Bordetella avium (strain 197N).